The chain runs to 134 residues: Small ribosomal subunit protein uS11 (134 aa).

This sequence belongs to the universal ribosomal protein uS11 family. In terms of assembly, part of the 30S ribosomal subunit. Interacts with proteins S7 and S18. Binds to IF-3.

In terms of biological role, located on the platform of the 30S subunit, it bridges several disparate RNA helices of the 16S rRNA. Forms part of the Shine-Dalgarno cleft in the 70S ribosome. This is Small ribosomal subunit protein uS11 from Salinibacter ruber (strain DSM 13855 / M31).